Consider the following 441-residue polypeptide: Xaa-Pro aminopeptidase (441 aa).

Residues Asp-261, Asp-272, His-355, Glu-384, and Glu-407 each coordinate Mn(2+).

The protein belongs to the peptidase M24B family. Homotetramer. Mn(2+) serves as cofactor.

It is found in the cytoplasm. The catalysed reaction is Release of any N-terminal amino acid, including proline, that is linked to proline, even from a dipeptide or tripeptide.. This chain is Xaa-Pro aminopeptidase (pepP), found in Escherichia coli (strain K12).